The following is a 368-amino-acid chain: MWIKELELKHYRNYDHLLASFSSGLNVFIGNNAQGKTNFLEAIYFLSLTRSHRTRADKELIHFDHSTVSLTGKIQRISGTVDLEINLSDKGRVTKINALKQAKLSDYIGTMMVVLFAPEDLQLVKGAPSLRRKFIDIDLGQIKPVYLSELSHYNHVLKQRNSYLKSAQQIDAAFLAVLDEQLASYGARVMEHRIDFINALEKEANTHHQAISNGLESLSLSYQSSVVFDKKTNIYQQFLHQLEKNHQKDFFRKNTSVGPHRDDLAFYINGMNANFASQGQHRSLILSLKMAEVSLMKALTGDNPILLLDDVMSELDNTRQTKLLETVIKENVQTFITTTSLDHLSQLPEGIRIFHVTKGTVQIDSDIH.

30–37 (GNNAQGKT) lines the ATP pocket.

This sequence belongs to the RecF family.

The protein resides in the cytoplasm. Functionally, the RecF protein is involved in DNA metabolism; it is required for DNA replication and normal SOS inducibility. RecF binds preferentially to single-stranded, linear DNA. It also seems to bind ATP. The protein is DNA replication and repair protein RecF of Streptococcus pyogenes serotype M49 (strain NZ131).